The sequence spans 318 residues: NADH-ubiquinone oxidoreductase chain 1 (318 aa).

The next 8 helical transmembrane spans lie at 2-22 (FMLNLLTMIVPVLLAVAFLTL), 68-88 (ITMFIMAPILALTLALTMWIP), 100-120 (LGVLFMLAMSSLAVYALLWSG), 147-167 (AIILLSTLLMSGSYSLSTLII), 171-191 (YIWLILPSWPLTMMWFISTLA), 217-237 (GGPFALFFLAEYANIIMMNAL), 254-273 (LYTTNFAMKTLLLTMSFLWI), and 294-314 (LPLTLALCMWYVTMPIMMAGI).

It belongs to the complex I subunit 1 family.

It localises to the mitochondrion inner membrane. The enzyme catalyses a ubiquinone + NADH + 5 H(+)(in) = a ubiquinol + NAD(+) + 4 H(+)(out). Its function is as follows. Core subunit of the mitochondrial membrane respiratory chain NADH dehydrogenase (Complex I) that is believed to belong to the minimal assembly required for catalysis. Complex I functions in the transfer of electrons from NADH to the respiratory chain. The immediate electron acceptor for the enzyme is believed to be ubiquinone. The chain is NADH-ubiquinone oxidoreductase chain 1 (MT-ND1) from Hsunycteris thomasi (Thomas's nectar bat).